Here is a 273-residue protein sequence, read N- to C-terminus: Hydroxyethylthiazole kinase (273 aa).

A substrate-binding site is contributed by M49. Positions 125 and 171 each coordinate ATP. Position 198 (G198) interacts with substrate.

Belongs to the Thz kinase family. It depends on Mg(2+) as a cofactor.

The enzyme catalyses 5-(2-hydroxyethyl)-4-methylthiazole + ATP = 4-methyl-5-(2-phosphooxyethyl)-thiazole + ADP + H(+). It functions in the pathway cofactor biosynthesis; thiamine diphosphate biosynthesis; 4-methyl-5-(2-phosphoethyl)-thiazole from 5-(2-hydroxyethyl)-4-methylthiazole: step 1/1. In terms of biological role, catalyzes the phosphorylation of the hydroxyl group of 4-methyl-5-beta-hydroxyethylthiazole (THZ). The polypeptide is Hydroxyethylthiazole kinase (Desulforudis audaxviator (strain MP104C)).